Consider the following 493-residue polypeptide: Galactose-1-phosphate uridylyltransferase 2 (493 aa).

Belongs to the galactose-1-phosphate uridylyltransferase type 2 family.

It is found in the cytoplasm. The enzyme catalyses alpha-D-galactose 1-phosphate + UDP-alpha-D-glucose = alpha-D-glucose 1-phosphate + UDP-alpha-D-galactose. The protein operates within carbohydrate metabolism; galactose metabolism. This is Galactose-1-phosphate uridylyltransferase 2 (galT2) from Streptococcus pneumoniae serotype 4 (strain ATCC BAA-334 / TIGR4).